The chain runs to 190 residues: Interferon alpha-11 (190 aa).

Residues 1 to 23 (MARLCAFLMILIVMSYWSTCSLG) form the signal peptide. Intrachain disulfides connect Cys24–Cys122 and Cys52–Cys162. Residue Asn101 is glycosylated (N-linked (GlcNAc...) asparagine).

Belongs to the alpha/beta interferon family. N-glycosylated.

The protein resides in the secreted. Functionally, has antiviral and antiproliferative activities. Produced by macrophages and stimulates the production of two enzymes: a protein kinase and an oligoadenylate synthetase. During viral infection, mediates antiviral effect, either directly by inducing interferon-stimulated genes, either indirectly through stimulation of natural killer cells enabling them to control viral replication. This is Interferon alpha-11 (Ifna11) from Mus musculus (Mouse).